The sequence spans 900 residues: DNA polymerase nu (900 aa).

Basic and acidic residues predominate over residues 60-75 (LEDRKTQSPEKKDLKS). 2 disordered regions span residues 60–90 (LEDR…LSPQ) and 863–900 (GPPP…SFCL). Residues 76 to 90 (LRSQTSRGSAKLSPQ) show a composition bias toward polar residues.

It belongs to the DNA polymerase type-A family. Interacts with FANCD2, FANCI, PCNA, RAD51 and HELQ. In terms of tissue distribution, highly expressed in testis and heart. Weakly expressed in skeletal muscle.

It is found in the nucleus. The enzyme catalyses DNA(n) + a 2'-deoxyribonucleoside 5'-triphosphate = DNA(n+1) + diphosphate. Inhibited by ddTTP. In terms of biological role, DNA polymerase with very low fidelity that catalyzes considerable misincorporation by inserting dTTP opposite a G template, and dGTP opposite a T template. Is the least accurate of the DNA polymerase A family (i.e. POLG, POLN and POLQ). Can perform accurate translesion DNA synthesis (TLS) past a 5S-thymine glycol. Can perform efficient strand displacement past a nick or a gap and gives rise to an amount of product similar to that on non-damaged template. Has no exonuclease activity. Error-prone DNA polymerase that preferentially misincorporates dT regardless of template sequence. May play a role in TLS during interstrand cross-link (ICL) repair. May be involved in TLS when genomic replication is blocked by extremely large major groove DNA lesions. May function in the bypass of some DNA-protein and DNA-DNA cross-links. May have a role in cellular tolerance to DNA cross-linking agents. Involved in the repair of DNA cross-links and double-strand break (DSB) resistance. Participates in FANCD2-mediated repair. Forms a complex with HELQ helicase that participates in homologous recombination (HR) repair and is essential for cellular protection against DNA cross-links. In Homo sapiens (Human), this protein is DNA polymerase nu (POLN).